A 1944-amino-acid polypeptide reads, in one-letter code: uncharacterized protein (1944 aa).

The tract at residues 908 to 999 (SQNLNFLKSK…SESEEESSNG (92 aa)) is disordered. Basic and acidic residues-rich tracts occupy residues 916-929 (SKQE…ESAK) and 939-949 (LSEKLNSDNHI). Over residues 985–996 (SDEDTSESEEES) the composition is skewed to acidic residues. Residue 1293–1300 (GPPGTGKT) participates in ATP binding. Positions 1824 to 1944 (QEAHKVKKRH…PPKVEHFKRK (121 aa)) are disordered. 2 stretches are compositionally biased toward basic and acidic residues: residues 1843–1852 (GTERDEDIPN) and 1869–1891 (KVTK…KIDE). The span at 1912-1922 (GHMKKSKKPKS) shows a compositional bias: basic residues.

The protein belongs to the DNA2/NAM7 helicase family.

Its subcellular location is the nucleus. This is an uncharacterized protein from Schizosaccharomyces pombe (strain 972 / ATCC 24843) (Fission yeast).